The sequence spans 458 residues: Pentatricopeptide repeat-containing protein At1g77405 (458 aa).

PPR repeat units follow at residues 164-198, 199-233, 236-271, 282-316, 317-351, 353-387, and 388-419; these read TTAS…HCKP, DVYA…GFRY, DTYT…NRMF, DVVT…GCVP, NQVT…GHGV, GSST…GLVP, and REYT…MREG.

The protein belongs to the PPR family. P subfamily.

This is Pentatricopeptide repeat-containing protein At1g77405 from Arabidopsis thaliana (Mouse-ear cress).